A 167-amino-acid chain; its full sequence is UPF0598 protein CG30010 (167 aa).

This sequence belongs to the UPF0598 family.

The chain is UPF0598 protein CG30010 from Drosophila melanogaster (Fruit fly).